Reading from the N-terminus, the 110-residue chain is uncharacterized protein (110 aa).

This sequence to M.jannaschii MJ0123 and MJ1213.

This is an uncharacterized protein from Aquifex aeolicus (strain VF5).